We begin with the raw amino-acid sequence, 454 residues long: UPF0210 protein Memar_2269 (454 aa).

Belongs to the UPF0210 family.

This Methanoculleus marisnigri (strain ATCC 35101 / DSM 1498 / JR1) protein is UPF0210 protein Memar_2269.